The following is a 130-amino-acid chain: Protein UL145 (130 aa).

In terms of assembly, interacts with host DDB1; this interaction promotes STAT2 degradation.

In terms of biological role, plays a role in the inhibition of host innate immunity by exploiting host DDB1-cullin RING ubiquitin ligases (CRLs). Mechanistically, recruits host DDB1 via a DCAF-like interaction motif to antagonize IFN signaling by STAT2 degradation. The protein is Protein UL145 (UL145) of Homo sapiens (Human).